A 494-amino-acid chain; its full sequence is Glutamyl-tRNA(Gln) amidotransferase subunit A, mitochondrial (494 aa).

Active-site charge relay system residues include lysine 79 and serine 160. The active-site Acyl-ester intermediate is serine 184.

It belongs to the amidase family. GatA subfamily. Subunit of the heterotrimeric GatCAB amidotransferase (AdT) complex, composed of A, B and C subunits.

It is found in the mitochondrion. The catalysed reaction is L-glutamyl-tRNA(Gln) + L-glutamine + ATP + H2O = L-glutaminyl-tRNA(Gln) + L-glutamate + ADP + phosphate + H(+). Its function is as follows. Allows the formation of correctly charged Gln-tRNA(Gln) through the transamidation of misacylated Glu-tRNA(Gln) in the mitochondria. The reaction takes place in the presence of glutamine and ATP through an activated gamma-phospho-Glu-tRNA(Gln). In Aedes aegypti (Yellowfever mosquito), this protein is Glutamyl-tRNA(Gln) amidotransferase subunit A, mitochondrial.